A 392-amino-acid chain; its full sequence is Major outer membrane protein P.IA (392 aa).

An N-terminal signal peptide occupies residues 1–19 (MRKKLTALVLSALPLAAVA).

It belongs to the Gram-negative porin family. Homotrimer.

Its subcellular location is the cell outer membrane. Its function is as follows. Serves as a slightly cation selective porin. Major antigen on the gonococcal cell surface and it may have pathogenic properties in addition to its porin activity. This is Major outer membrane protein P.IA (porA) from Neisseria meningitidis serogroup B / serotype 15 (strain H44/76).